We begin with the raw amino-acid sequence, 175 residues long: MNHDFNQDFFSLFGLPRRFAIDAAGLDAAWRAAAAQVHPDRYAASSDADKRSALMLATRVNEGYQTLKSPLNRARYLLQLSGVDTQEENNTRMPADFLMAQMEWRESIDDARADVDALESLSRRLRGEVRDLQTELEAALDARADLDAAAVLVRKLRFMEKLDQEIGDAIESLLD.

The region spanning 8-80 (DFFSLFGLPR…LNRARYLLQL (73 aa)) is the J domain.

Belongs to the HscB family. In terms of assembly, interacts with HscA and stimulates its ATPase activity.

Functionally, co-chaperone involved in the maturation of iron-sulfur cluster-containing proteins. Seems to help targeting proteins to be folded toward HscA. This Chromobacterium violaceum (strain ATCC 12472 / DSM 30191 / JCM 1249 / CCUG 213 / NBRC 12614 / NCIMB 9131 / NCTC 9757 / MK) protein is Co-chaperone protein HscB homolog.